Consider the following 171-residue polypeptide: ATP synthase subunit b (171 aa).

Residues 2 to 22 traverse the membrane as a helical segment; sequence FVVKMVLGFLILLSPLCATGL.

This sequence belongs to the ATPase B chain family. In terms of assembly, F-type ATPases have 2 components, F(1) - the catalytic core - and F(0) - the membrane proton channel. F(1) has five subunits: alpha(3), beta(3), gamma(1), delta(1), epsilon(1). F(0) has three main subunits: a(1), b(2) and c(10-14). The alpha and beta chains form an alternating ring which encloses part of the gamma chain. F(1) is attached to F(0) by a central stalk formed by the gamma and epsilon chains, while a peripheral stalk is formed by the delta and b chains.

The protein resides in the cell inner membrane. In terms of biological role, f(1)F(0) ATP synthase produces ATP from ADP in the presence of a proton or sodium gradient. F-type ATPases consist of two structural domains, F(1) containing the extramembraneous catalytic core and F(0) containing the membrane proton channel, linked together by a central stalk and a peripheral stalk. During catalysis, ATP synthesis in the catalytic domain of F(1) is coupled via a rotary mechanism of the central stalk subunits to proton translocation. Component of the F(0) channel, it forms part of the peripheral stalk, linking F(1) to F(0). The protein is ATP synthase subunit b of Helicobacter pylori (strain ATCC 700392 / 26695) (Campylobacter pylori).